The chain runs to 682 residues: Polyadenylate-binding protein 5 (682 aa).

4 consecutive RRM domains span residues 59 to 136, 146 to 223, 239 to 316, and 342 to 419; these read SSLY…LSNR, GNVF…HFVR, TNVY…RAQK, and SNLY…LAQR. The 78-residue stretch at 588–665 folds into the PABC domain; it reads TISKLASDLA…ALDVLRRSAD (78 aa). S600 is subject to Phosphoserine.

Belongs to the polyadenylate-binding protein type-1 family. In terms of tissue distribution, expressed predominantly in immature flowers but also at lower levels in mature flowers and siliques. Detected in tapetum, pollen, ovules and developing seeds. Also detected in primary inflorescences and immature siliques.

It localises to the cytoplasm. The protein resides in the nucleus. Its function is as follows. Binds the poly(A) tail of mRNA. Appears to be an important mediator of the multiple roles of the poly(A) tail in mRNA biogenesis, stability and translation. This chain is Polyadenylate-binding protein 5 (PAB5), found in Arabidopsis thaliana (Mouse-ear cress).